The primary structure comprises 1012 residues: Ubiquitin-like modifier-activating enzyme 7 (1012 aa).

One copy of the 1-1 repeat lies at Gly-23–Phe-159. A 2 approximate repeats region spans residues Gly-23–Met-575. Ser-266 carries the post-translational modification Phosphoserine. The 1-2 repeat unit spans residues Gly-423 to Met-575. ATP is bound at residue Ala-442–His-471. Catalysis depends on Cys-599, which acts as the Glycyl thioester intermediate.

Belongs to the ubiquitin-activating E1 family. In terms of assembly, (Microbial infection) Interacts with human cytomegalovirus proteins NEC2/UL50 and UL26; these interactions inhibit ISGylation and cause proteasomal degradation of UBA7. (Microbial infection) Interacts with rotavirus non-structural protein 5 (NSP5); this interaction promotes UBA7 proteasomal degradation. As to quaternary structure, monomer. Binds and is involved in the conjugation of G1P2/ISG15. ISGylated. Post-translationally, ubiquitinated by RNF170. As to expression, expressed in a variety of normal and tumor cell types, but is reduced in lung cancer cell lines.

It localises to the cytoplasm. The protein localises to the nucleus. It functions in the pathway protein modification; protein ubiquitination. In terms of biological role, E1-activating enzyme that catalyzes the covalent conjugation of the ubiquitin-like protein product of ISG15 to additional interferon stimulated proteins (ISGs) as well as other cellular proteins such as P53 in a process termed protein ISGylation. Plays an essential role in antiviral immunity together with ISG15 by restricting the replication of many viruses including rabies virus, influenza virus, sindbis virus, rotavirus or human cytomegalovirus. For example, ISG15 modification of influenza A protein NS1 disrupts the association of the NS1 with importin-alpha leading to NS1 nuclear import inhibition. ISGylation of human cytomegalovirs protein UL26 regulates its stability and inhibits its activities to suppress NF-kappa-B signaling. This Homo sapiens (Human) protein is Ubiquitin-like modifier-activating enzyme 7.